Reading from the N-terminus, the 341-residue chain is HTH-type transcriptional repressor PurR (341 aa).

An HTH lacI-type domain is found at 2-56 (ATIKDVAKRANVSTTTVSHVINKTRFVAEETRNAVWAAIKELHYSPSAVARSLKV). Positions 4-23 (IKDVAKRANVSTTTVSHVIN) form a DNA-binding region, H-T-H motif. A DNA-binding region spans residues 48 to 56 (SAVARSLKV). Residues Tyr-73, Arg-190, Thr-192, Phe-221, and Asp-275 each contribute to the hypoxanthine site.

Homodimer.

The protein operates within purine metabolism; purine nucleotide biosynthesis [regulation]. Its function is as follows. Is the main repressor of the genes involved in the de novo synthesis of purine nucleotides, regulating purB, purC, purEK, purF, purHD, purL, purMN and guaBA expression. PurR is allosterically activated to bind its cognate DNA by binding the purine corepressors, hypoxanthine or guanine, thereby effecting transcription repression. In Klebsiella pneumoniae subsp. pneumoniae (strain ATCC 700721 / MGH 78578), this protein is HTH-type transcriptional repressor PurR.